Reading from the N-terminus, the 196-residue chain is Urease accessory protein UreE (196 aa).

A disordered region spans residues 150–196 (RGAYSGGHDHGHAHAHSHAEAHSHAHGESHSHSHSHSHDDHHHHDHD). The span at 156 to 196 (GHDHGHAHAHSHAEAHSHAHGESHSHSHSHSHDDHHHHDHD) shows a compositional bias: basic and acidic residues.

The protein belongs to the UreE family.

It is found in the cytoplasm. Functionally, involved in urease metallocenter assembly. Binds nickel. Probably functions as a nickel donor during metallocenter assembly. The protein is Urease accessory protein UreE of Mesorhizobium japonicum (strain LMG 29417 / CECT 9101 / MAFF 303099) (Mesorhizobium loti (strain MAFF 303099)).